We begin with the raw amino-acid sequence, 513 residues long: GMP synthase [glutamine-hydrolyzing] (513 aa).

Residues 3–200 (SVLVLDFGSQ…LLNIAGITPD (198 aa)) form the Glutamine amidotransferase type-1 domain. C80 acts as the Nucleophile in catalysis. Active-site residues include H174 and E176. One can recognise a GMPS ATP-PPase domain in the interval 201–388 (WSSKSFIDHQ…LGIAEDILMR (188 aa)). ATP is bound at residue 228-234 (SGGVDST).

As to quaternary structure, homodimer.

The catalysed reaction is XMP + L-glutamine + ATP + H2O = GMP + L-glutamate + AMP + diphosphate + 2 H(+). The protein operates within purine metabolism; GMP biosynthesis; GMP from XMP (L-Gln route): step 1/1. In terms of biological role, catalyzes the synthesis of GMP from XMP. The protein is GMP synthase [glutamine-hydrolyzing] of Chlorobium phaeovibrioides (strain DSM 265 / 1930) (Prosthecochloris vibrioformis (strain DSM 265)).